Consider the following 149-residue polypeptide: Transcriptional repressor NrdR (149 aa).

Residues 3-34 (CPFCSATDTKVIDSRLVADGHQVRRRRECVQC) fold into a zinc finger. The ATP-cone domain occupies 49-139 (PRVVKQDGSR…VYRAFEDVSE (91 aa)).

This sequence belongs to the NrdR family. Zn(2+) is required as a cofactor.

Negatively regulates transcription of bacterial ribonucleotide reductase nrd genes and operons by binding to NrdR-boxes. This chain is Transcriptional repressor NrdR, found in Shewanella halifaxensis (strain HAW-EB4).